We begin with the raw amino-acid sequence, 330 residues long: Aspartate--ammonia ligase (330 aa).

It belongs to the class-II aminoacyl-tRNA synthetase family. AsnA subfamily.

The protein localises to the cytoplasm. It carries out the reaction L-aspartate + NH4(+) + ATP = L-asparagine + AMP + diphosphate + H(+). Its pathway is amino-acid biosynthesis; L-asparagine biosynthesis; L-asparagine from L-aspartate (ammonia route): step 1/1. This Streptococcus pyogenes serotype M5 (strain Manfredo) protein is Aspartate--ammonia ligase.